The sequence spans 326 residues: uncharacterized protein (326 aa).

This sequence belongs to the ParB family.

This is an uncharacterized protein from Acidianus two-tailed virus (ATV).